Reading from the N-terminus, the 380-residue chain is Homoserine O-acetyltransferase (380 aa).

Residues 59–363 (NVVMVLHALT…IYGHDGFLVE (305 aa)) enclose the AB hydrolase-1 domain. The Nucleophile role is filled by Ser-164. Arg-234 contacts substrate. Active-site residues include Asp-327 and His-357. Asp-358 provides a ligand contact to substrate.

The protein belongs to the AB hydrolase superfamily. MetX family. Homodimer.

The protein localises to the cytoplasm. It catalyses the reaction L-homoserine + acetyl-CoA = O-acetyl-L-homoserine + CoA. The protein operates within amino-acid biosynthesis; L-methionine biosynthesis via de novo pathway; O-acetyl-L-homoserine from L-homoserine: step 1/1. Transfers an acetyl group from acetyl-CoA to L-homoserine, forming acetyl-L-homoserine. This chain is Homoserine O-acetyltransferase, found in Mycolicibacterium smegmatis (strain ATCC 700084 / mc(2)155) (Mycobacterium smegmatis).